The sequence spans 574 residues: Probable glucomannan 4-beta-mannosyltransferase 6 (574 aa).

A helical membrane pass occupies residues 87–107 (VVACMVMSVIVLAEKVFLGVV). The active site involves D180. Substrate contacts are provided by D239 and D241. The active site involves D333. The next 4 helical transmembrane spans lie at 412–432 (IISTFFTFFFFSVLLPMKVFF), 437–457 (IPLWELILIPTAIILLHSVGT), 523–543 (FHCLELFIGGFLLTSACYDYL), and 548–568 (IFYIFLLSQSIIYFAIGFEFM).

It belongs to the glycosyltransferase 2 family. Plant cellulose synthase-like A subfamily.

The protein resides in the golgi apparatus membrane. The catalysed reaction is GDP-mannose + (glucomannan)n = GDP + (glucomannan)n+1.. Probable mannan synthase which consists of a 4-beta-mannosyltransferase activity on mannan using GDP-mannose. The beta-1,4-mannan product is the backbone for galactomannan synthesis by galactomannan galactosyltransferase. Galactomannan is a noncellulosic polysaccharides of plant cell wall. The protein is Probable glucomannan 4-beta-mannosyltransferase 6 of Oryza sativa subsp. japonica (Rice).